We begin with the raw amino-acid sequence, 239 residues long: Octanoyltransferase (239 aa).

Residues 48-236 (EGGDELVWLV…AFETVFGETV (189 aa)) enclose the BPL/LPL catalytic domain. Substrate-binding positions include 87–94 (RGGEYTYH), 167–169 (ALG), and 180–182 (GLS). The active-site Acyl-thioester intermediate is the Cys198.

Belongs to the LipB family.

It is found in the cytoplasm. The enzyme catalyses octanoyl-[ACP] + L-lysyl-[protein] = N(6)-octanoyl-L-lysyl-[protein] + holo-[ACP] + H(+). The protein operates within protein modification; protein lipoylation via endogenous pathway; protein N(6)-(lipoyl)lysine from octanoyl-[acyl-carrier-protein]: step 1/2. Functionally, catalyzes the transfer of endogenously produced octanoic acid from octanoyl-acyl-carrier-protein onto the lipoyl domains of lipoate-dependent enzymes. Lipoyl-ACP can also act as a substrate although octanoyl-ACP is likely to be the physiological substrate. The sequence is that of Octanoyltransferase from Rhizobium etli (strain CIAT 652).